Here is a 408-residue protein sequence, read N- to C-terminus: Argininosuccinate synthase (408 aa).

Residues 10–18 (AYSGGLDTS) and Ala37 contribute to the ATP site. The L-citrulline site is built by Tyr90 and Ser95. Gly120 provides a ligand contact to ATP. Residues Thr122, Asn126, and Asp127 each coordinate L-aspartate. An L-citrulline-binding site is contributed by Asn126. L-citrulline-binding residues include Arg130, Ser181, Ser190, Glu266, and Tyr278.

This sequence belongs to the argininosuccinate synthase family. Type 1 subfamily. Homotetramer.

The protein localises to the cytoplasm. It catalyses the reaction L-citrulline + L-aspartate + ATP = 2-(N(omega)-L-arginino)succinate + AMP + diphosphate + H(+). The protein operates within amino-acid biosynthesis; L-arginine biosynthesis; L-arginine from L-ornithine and carbamoyl phosphate: step 2/3. This Cereibacter sphaeroides (strain ATCC 17029 / ATH 2.4.9) (Rhodobacter sphaeroides) protein is Argininosuccinate synthase.